The primary structure comprises 460 residues: G-protein coupled receptor 22 (460 aa).

Over 1–74 (MESMPSSLTH…YPVSFQVSLT (74 aa)) the chain is Cytoplasmic. Residues 75 to 95 (GFLMLEIVLGLSSNLTVLALY) form a helical membrane-spanning segment. Over 96-114 (CMKSNLVSSVSNIVTMNLH) the chain is Extracellular. The helical transmembrane segment at 115-135 (VLDVLVCVGCIPLTIVVVLLP) threads the bilayer. The Cytoplasmic segment spans residues 136–144 (LEGNNALIC). A helical membrane pass occupies residues 145 to 165 (CFHEACVSFASVATAANVLAI). The Extracellular segment spans residues 166 to 185 (TLDRYDISVRPANRVLTMGR). The chain crosses the membrane as a helical span at residues 186-206 (AVALLGSIWALSFFSFLVPFI). Residues 207–235 (EEGFFSQAGNERNQTEAEEPSNEYYTELG) are Cytoplasmic-facing. Residues 236–256 (LYYHLLAQIPIFFFTAVVMLV) traverse the membrane as a helical segment. The Extracellular segment spans residues 257 to 343 (TYYKILQALN…ERQKRVFRMS (87 aa)). A compositionally biased stretch (basic residues) spans 276–286 (VPKKKPRKKKT). Residues 276–309 (VPKKKPRKKKTISMTSTQPESTDASQSSAGRNAP) are disordered. Residues 287–305 (ISMTSTQPESTDASQSSAG) show a composition bias toward polar residues. Residues 344 to 364 (LLIISTFLLCWTPITVLNTVI) form a helical membrane-spanning segment. The Cytoplasmic portion of the chain corresponds to 365-377 (LSVGPSNFTVRLR). The helical transmembrane segment at 378-398 (LGFLVMAYGTTIFHPLLYAFT) threads the bilayer. The Extracellular portion of the chain corresponds to 399–460 (RQKFQKVLKS…QKCLSSEDVE (62 aa)).

It belongs to the G-protein coupled receptor 1 family.

The protein localises to the cell membrane. In terms of biological role, orphan G-protein coupled receptor that regulates cilia length and structure in the Kupffer's vesicle leading to the left-right asymmetry development by establishing a directional fluid flow. The sequence is that of G-protein coupled receptor 22 (gpr22a) from Danio rerio (Zebrafish).